The following is a 363-amino-acid chain: RNFANDATFDIKKCDVHRLEEGPPTTAVLTREEGLKYYKIMQTVRRMELKADQLYKQKIIRGFCHLYDGQEACCMGLEAGINPTDHVITAYRAHGFTYTRGLPVREILAELTGRRGGCAKGKGGSMHMYAKNFYGGNGIVGAQVPLGVGIALACKYNEKDEICLTLYGDGAANQGQIFEAYNMAALWKLPCIFICENNRYGMGTSVERAAASTDYYKRGDFIPGIMVDGMDVLCVREATKFAAAYCRSGKGPMLMELQTYRYHGHSMSDPGVSYRTREEIQEVRSKSDPIMLLKDRMVNNNLASIEELKEIDVEVRKEIEDAAQFATADPEPPLEELGYHIYSRDPPFEVRGANQWIKYKSVS.

The transit peptide at 1-2 (RN) directs the protein to the mitochondrion. At lysine 36 the chain carries N6-acetyllysine; alternate. Lysine 36 carries the post-translational modification N6-succinyllysine; alternate. Pyruvate contacts are provided by histidine 65, tyrosine 91, arginine 92, alanine 130, glycine 138, valine 140, aspartate 169, glycine 170, alanine 171, asparagine 198, and tyrosine 200. Thiamine diphosphate contacts are provided by tyrosine 91 and arginine 92. Residues glycine 138, valine 140, aspartate 169, glycine 170, alanine 171, and asparagine 198 each coordinate thiamine diphosphate. Aspartate 169 serves as a coordination point for Mg(2+). Residues asparagine 198 and tyrosine 200 each contribute to the Mg(2+) site. Serine 205 is modified (phosphoserine; by PDK1). At lysine 217 the chain carries N6-acetyllysine; alternate. N6-succinyllysine; alternate is present on lysine 217. An N6-acetyllysine modification is found at lysine 240. The residue at position 250 (lysine 250) is an N6-succinyllysine. Histidine 265 contacts thiamine diphosphate. Serine 266 is modified (phosphoserine; by PDK1, PDK2, PDK3 and PDK4). Serine 268 bears the Phosphoserine mark. Serine 273 bears the Phosphoserine; by PDK1, PDK2, PDK3 and PDK4 mark. Tyrosine 274 is modified (phosphotyrosine). Position 286 is an N6-acetyllysine; alternate (lysine 286). N6-succinyllysine; alternate is present on lysine 286. An N6-acetyllysine mark is found at lysine 294 and lysine 309. Lysine 358 carries the post-translational modification N6-succinyllysine.

Heterotetramer of two PDHA1 and two PDHB subunits. The heterotetramer interacts with DLAT, and is part of the multimeric pyruvate dehydrogenase complex that contains multiple copies of pyruvate dehydrogenase (E1), dihydrolipoamide acetyltransferase (DLAT, E2) and lipoamide dehydrogenase (DLD, E3). These subunits are bound to an inner core composed of about 48 DLAT and 12 PDHX molecules. Requires thiamine diphosphate as cofactor. Mg(2+) is required as a cofactor. In terms of processing, phosphorylation at Ser-205, Ser-266 and Ser-273 by PDK family kinases inactivates the enzyme; for this phosphorylation at a single site is sufficient. Phosphorylation at Ser-266 interferes with access to active site, and thereby inactivates the enzyme. Dephosphorylation at all three sites, i.e. at Ser-205, Ser-266 and Ser-273, is required for reactivation. Acetylation alters the phosphorylation pattern. Deacetylated by SIRT3.

The protein localises to the mitochondrion matrix. The enzyme catalyses N(6)-[(R)-lipoyl]-L-lysyl-[protein] + pyruvate + H(+) = N(6)-[(R)-S(8)-acetyldihydrolipoyl]-L-lysyl-[protein] + CO2. Pyruvate dehydrogenase activity is inhibited by phosphorylation of PDHA1; it is reactivated by dephosphorylation. Its function is as follows. The pyruvate dehydrogenase complex catalyzes the overall conversion of pyruvate to acetyl-CoA and CO(2), and thereby links the glycolytic pathway to the tricarboxylic cycle. The sequence is that of Pyruvate dehydrogenase E1 component subunit alpha, mitochondrial (PDHA) from Sminthopsis macroura (Stripe-faced dunnart).